A 141-amino-acid polypeptide reads, in one-letter code: VLSPADKTNVKTAWEKVGGHAGEYGAEALERMFLSFPTTKTYFPHFDLSHGSAQVKAHGKKVADALTTAVSHVDDMPSALSALSDLHAHKLRVDPVNFKLLSHCLLVTLACHHPADFTPAVHASLDKFLASVSTVLTSKYR.

Positions Val1 to Arg141 constitute a Globin domain. Ser3 carries the phosphoserine modification. Lys7 is modified (N6-succinyllysine). Residue Thr8 is modified to Phosphothreonine. Lys11 carries the N6-succinyllysine modification. An N6-acetyllysine; alternate modification is found at Lys16. At Lys16 the chain carries N6-succinyllysine; alternate. Tyr24 carries the phosphotyrosine modification. The residue at position 35 (Ser35) is a Phosphoserine. Lys40 carries the post-translational modification N6-succinyllysine. Ser49 carries the post-translational modification Phosphoserine. His58 contributes to the O2 binding site. His87 lines the heme b pocket. Ser102 carries the post-translational modification Phosphoserine. Thr108 bears the Phosphothreonine mark. 2 positions are modified to phosphoserine: Ser124 and Ser131. Residues Thr134 and Thr137 each carry the phosphothreonine modification. Ser138 is modified (phosphoserine).

Belongs to the globin family. As to quaternary structure, heterotetramer of two alpha chains and two beta chains. As to expression, red blood cells.

Functionally, involved in oxygen transport from the lung to the various peripheral tissues. Its function is as follows. Hemopressin acts as an antagonist peptide of the cannabinoid receptor CNR1. Hemopressin-binding efficiently blocks cannabinoid receptor CNR1 and subsequent signaling. The protein is Hemoglobin subunit alpha (HBA) of Loris tardigradus (Slender loris).